Here is a 527-residue protein sequence, read N- to C-terminus: Fusicoccadiene C-8 hydroxylase (527 aa).

Residues 15 to 35 (GKPLLLFLILITLTYSLGIVF) traverse the membrane as a helical segment. An N-linked (GlcNAc...) asparagine glycan is attached at Asn-125. Residue Cys-465 participates in heme binding. Asn-496 carries an N-linked (GlcNAc...) asparagine glycan.

This sequence belongs to the cytochrome P450 family. The cofactor is heme.

It localises to the membrane. It functions in the pathway mycotoxin biosynthesis. Functionally, cytochrome P450 monooxygenase; part of the gene cluster that mediates the biosynthesis of the diterpene glucoside brassicicene C. In the first step of the brassicicene C biosynthesis, the bifunctional diterpene synthase bsc8 that possesses both prenyl transferase and terpene cyclase activity, converts isopentenyl diphosphate and dimethylallyl diphosphate into geranylgeranyl diphosphate (GGDP) that is further converted into fusicocca-2,10(14)-diene, the first precursor for brassicicene C. Fusicocca-2,10(14)-diene is then substrate of cytochrome P450 monooxygenase bsc1 for hydroxylation at the C-8 position. Oxidation at C-16 position to aldehyde is then catalyzed by the cytochrome P450 monooyxygenase bsc7, yielding fusicocca-2,10(14)-diene-8-beta,16-diol. Follows the isomerization of the double bond and reduction of aldehyde to alcohol catalyzed by the short-chain dehydrogenase/reductase bsc3 to yield the diol compound fusicocca-1,10(14)-diene-8 beta,16-diol. The next step is the oxidation at the C-3 position of fusicocca-2,10(14)-diene-8-beta,16-diol catalyzed by the alpha-ketoglutarate dependent dioxygenase bsc9, to produce a triol compound. Methylation of the hydroxy group at position 16 is performed by the methyltransferase bsc6. 16-O-methylation is followed by oxidation at the C-13 position to ketone and an alkyl shift of the methyl group leads to brassicicene C. Although the probable acetyltransferase bsc4 is included in the gene cluster, no acetylation reactions are necessary for brassicicene C biosynthesis. However, the fact that brassicicene E, which is a structurally related compound having an acetoxy group at position 12, was previously isolated from another strain of A.brassicicola suggests that the ATCC 96836 strain might also produce a small amount of brassicicene E. This Alternaria brassicicola (Dark leaf spot agent) protein is Fusicoccadiene C-8 hydroxylase.